A 408-amino-acid chain; its full sequence is MGDLTIPTMDDIDIQSKKVLLRIDINSPVDENGKIIDDSRIKAHIGTIKELINKGNSVVLISHQGRPGDKDFTSLEEHAKLISKYLDREVIFVDDVIGPYAREMIKKLENNGILLLDNIRLISEELIEAPPQQHVKSFLVKKLAPLFDIYINDAFATAHRSQPSIVGFPLALPSAAGRVMEREVSALAKIFNAEDTPKIFTLGGGKVHDTIRIIENLVRKRIADRILTGGLVAELFSVAKGMNLNPKNMEILEKLGILSLIPRARKLLLSGAPIEIPVDYKVEINGNVIEEPASKVTGIIKDIGSTTAEIYSSFIKDAKVVVLRGPMGVIEDERFKSGSKSVLKASLEGQGYVIIGGGHMISALDEDMKIDSSKVHISTGGGALLLFLSGERLPALEALSMSVVNSGD.

Substrate contacts are provided by residues 24-26, Arg-40, 63-66, Arg-120, and Arg-160; these read DIN and HQGR. ATP contacts are provided by residues Glu-331 and 357–360; that span reads GGHM.

Belongs to the phosphoglycerate kinase family.

It is found in the cytoplasm. The catalysed reaction is (2R)-3-phosphoglycerate + ATP = (2R)-3-phospho-glyceroyl phosphate + ADP. The protein operates within carbohydrate degradation; glycolysis; pyruvate from D-glyceraldehyde 3-phosphate: step 2/5. This is Phosphoglycerate kinase (pgk) from Saccharolobus solfataricus (strain ATCC 35092 / DSM 1617 / JCM 11322 / P2) (Sulfolobus solfataricus).